Here is a 259-residue protein sequence, read N- to C-terminus: uncharacterized protein (259 aa).

6 helical membrane passes run 9–31 (ILSV…LESL), 84–106 (LLGG…LQWF), 126–148 (FLIY…FVFG), 153–175 (SIVA…LEYV), 196–215 (HFIL…YIAA), and 230–252 (TFRA…SWLG).

The protein localises to the cell membrane. This is an uncharacterized protein from Archaeoglobus fulgidus (strain ATCC 49558 / DSM 4304 / JCM 9628 / NBRC 100126 / VC-16).